A 20-amino-acid chain; its full sequence is Pregnancy-associated glycoprotein 67A (20 aa).

2 N-linked (GlcNAc...) asparagine glycosylation sites follow: N4 and N20.

This sequence belongs to the peptidase A1 family. Chorionic epithelium (trophectoderm) and placental cotyledons.

It is found in the secreted. The protein resides in the extracellular space. The polypeptide is Pregnancy-associated glycoprotein 67A (Bison bonasus (European bison)).